The primary structure comprises 449 residues: UNC93-like protein MFSD11 (449 aa).

A helical transmembrane segment spans residues 8–28 (LFNIIILGVAFMFMFTAFQTC). N-linked (GlcNAc...) asparagine glycosylation is present at Asn40. 5 consecutive transmembrane segments (helical) span residues 53 to 73 (AIIY…VAIV), 74 to 94 (GPQL…AVFI), 96 to 116 (PFPW…AVLW), 138 to 158 (IFWA…YFAW), and 170 to 190 (RTVF…FFLI). The residue at position 204 (Ser204) is a Phosphoserine. 6 helical membrane passes run 239–259 (MLLL…FSGV), 277–297 (LIGL…SLFG), 309–329 (PVVL…FLNM), 359–379 (FLLG…LGFL), 385–405 (APAF…AFFY), and 410–430 (LLHW…ISFF).

The protein belongs to the unc-93 family.

The protein resides in the membrane. The protein is UNC93-like protein MFSD11 (MFSD11) of Macaca fascicularis (Crab-eating macaque).